The primary structure comprises 130 residues: Small ribosomal subunit protein uS11 (130 aa).

This sequence belongs to the universal ribosomal protein uS11 family. Part of the 30S ribosomal subunit. Interacts with proteins S7 and S18. Binds to IF-3.

Located on the platform of the 30S subunit, it bridges several disparate RNA helices of the 16S rRNA. Forms part of the Shine-Dalgarno cleft in the 70S ribosome. The chain is Small ribosomal subunit protein uS11 from Shewanella baltica (strain OS223).